A 306-amino-acid chain; its full sequence is Agmatinase (306 aa).

His-126, Asp-149, His-151, Asp-153, Asp-230, and Asp-232 together coordinate Mn(2+).

The protein belongs to the arginase family. Agmatinase subfamily. It depends on Mn(2+) as a cofactor.

It carries out the reaction agmatine + H2O = urea + putrescine. The protein operates within amine and polyamine biosynthesis; putrescine biosynthesis via agmatine pathway; putrescine from agmatine: step 1/1. Functionally, catalyzes the formation of putrescine from agmatine. In Salmonella dublin (strain CT_02021853), this protein is Agmatinase.